We begin with the raw amino-acid sequence, 41 residues long: Photosystem I reaction center subunit IX (41 aa).

A helical membrane pass occupies residues 7 to 27 (YLSTAPVLLTLWMTFTAGFII).

It belongs to the PsaJ family.

Its subcellular location is the plastid. The protein localises to the chloroplast thylakoid membrane. In terms of biological role, may help in the organization of the PsaE and PsaF subunits. The polypeptide is Photosystem I reaction center subunit IX (Trieres chinensis (Marine centric diatom)).